Reading from the N-terminus, the 562-residue chain is TBC1 domain family member 24 (562 aa).

A 1,2-diacyl-sn-glycero-3-phospho-(1D-myo-inositol) is bound by residues Lys36, Arg40, Lys238, Arg242, and Arg293–Arg297. One can recognise a Rab-GAP TBC domain in the interval Gly42 to Pro259. A TLDc domain is found at Glu337–Lys549. The segment at Asn450–Ser471 is disordered. Over residues Ala454–Ile468 the composition is skewed to basic and acidic residues.

Interacts with ARF6.

The protein localises to the cell membrane. Its subcellular location is the cytoplasm. It localises to the cytoplasmic vesicle membrane. The protein resides in the presynapse. May act as a GTPase-activating protein for Rab family protein(s). Involved in neuronal projections development, probably through a negative modulation of ARF6 function. Involved in the regulation of synaptic vesicle trafficking. The polypeptide is TBC1 domain family member 24 (tbc1d24) (Xenopus laevis (African clawed frog)).